A 346-amino-acid chain; its full sequence is Selenide, water dikinase (346 aa).

Sec16 is an active-site residue. A non-standard amino acid (selenocysteine) is located at residue Sec16. Residues Lys19 and 47–49 (TAD) each bind ATP. Residue Asp50 coordinates Mg(2+). Residues Asp67, Asp90, and 138-140 (GHS) each bind ATP. Asp90 is a Mg(2+) binding site. Asp226 lines the Mg(2+) pocket.

It belongs to the selenophosphate synthase 1 family. Class I subfamily. As to quaternary structure, homodimer. The cofactor is Mg(2+).

It catalyses the reaction hydrogenselenide + ATP + H2O = selenophosphate + AMP + phosphate + 2 H(+). In terms of biological role, synthesizes selenophosphate from selenide and ATP. The polypeptide is Selenide, water dikinase (Haemophilus ducreyi (strain 35000HP / ATCC 700724)).